Here is a 115-residue protein sequence, read N- to C-terminus: Holo-[acyl-carrier-protein] synthase (115 aa).

Mg(2+) contacts are provided by D6 and E51.

It belongs to the P-Pant transferase superfamily. AcpS family. Mg(2+) is required as a cofactor.

It is found in the cytoplasm. It catalyses the reaction apo-[ACP] + CoA = holo-[ACP] + adenosine 3',5'-bisphosphate + H(+). Its function is as follows. Transfers the 4'-phosphopantetheine moiety from coenzyme A to a Ser of acyl-carrier-protein. The protein is Holo-[acyl-carrier-protein] synthase of Campylobacter jejuni subsp. doylei (strain ATCC BAA-1458 / RM4099 / 269.97).